Consider the following 475-residue polypeptide: Ribulose bisphosphate carboxylase large chain (475 aa).

Residues 1-2 (MS) constitute a propeptide that is removed on maturation. N-acetylproline is present on P3. K14 bears the N6,N6,N6-trimethyllysine mark. Substrate-binding residues include N123 and T173. K175 functions as the Proton acceptor in the catalytic mechanism. A substrate-binding site is contributed by K177. The Mg(2+) site is built by K201, D203, and E204. K201 bears the N6-carboxylysine mark. H294 functions as the Proton acceptor in the catalytic mechanism. Positions 295, 327, and 379 each coordinate substrate.

It belongs to the RuBisCO large chain family. Type I subfamily. Heterohexadecamer of 8 large chains and 8 small chains; disulfide-linked. The disulfide link is formed within the large subunit homodimers. It depends on Mg(2+) as a cofactor. In terms of processing, the disulfide bond which can form in the large chain dimeric partners within the hexadecamer appears to be associated with oxidative stress and protein turnover.

It is found in the plastid. It localises to the chloroplast. The enzyme catalyses 2 (2R)-3-phosphoglycerate + 2 H(+) = D-ribulose 1,5-bisphosphate + CO2 + H2O. The catalysed reaction is D-ribulose 1,5-bisphosphate + O2 = 2-phosphoglycolate + (2R)-3-phosphoglycerate + 2 H(+). Functionally, ruBisCO catalyzes two reactions: the carboxylation of D-ribulose 1,5-bisphosphate, the primary event in carbon dioxide fixation, as well as the oxidative fragmentation of the pentose substrate in the photorespiration process. Both reactions occur simultaneously and in competition at the same active site. This chain is Ribulose bisphosphate carboxylase large chain, found in Nandina domestica (Heavenly bamboo).